A 166-amino-acid polypeptide reads, in one-letter code: MPRSQRNDNFIDKTFTVVADILVKVLPTSNREKQAFTYYRDGMAAQAEGEYAEALQNYYQALRLEIDPYDRSYILYNIGLIYTCNGEHGRALEYYYQALERNPSLPQALNNIAVIYHYRGEQAIERGQSEISKLLFDKAADYWKEAIRLAPTNYLEAQSWLNQYTN.

3 TPR repeats span residues 35 to 68 (AFTY…EIDP), 72 to 105 (SYIL…NPSL), and 120 to 153 (GEQA…APTN).

It belongs to the Ycf3 family.

It is found in the plastid. The protein localises to the chloroplast thylakoid membrane. Essential for the assembly of the photosystem I (PSI) complex. May act as a chaperone-like factor to guide the assembly of the PSI subunits. The protein is Photosystem I assembly protein Ycf3 of Oltmannsiellopsis viridis (Marine flagellate).